Consider the following 432-residue polypeptide: Glutamate-1-semialdehyde 2,1-aminomutase (432 aa).

Position 269 is an N6-(pyridoxal phosphate)lysine (lysine 269).

The protein belongs to the class-III pyridoxal-phosphate-dependent aminotransferase family. HemL subfamily. Homodimer. Requires pyridoxal 5'-phosphate as cofactor.

It is found in the cytoplasm. The catalysed reaction is (S)-4-amino-5-oxopentanoate = 5-aminolevulinate. It functions in the pathway porphyrin-containing compound metabolism; protoporphyrin-IX biosynthesis; 5-aminolevulinate from L-glutamyl-tRNA(Glu): step 2/2. Its pathway is porphyrin-containing compound metabolism; chlorophyll biosynthesis. This chain is Glutamate-1-semialdehyde 2,1-aminomutase, found in Chloroherpeton thalassium (strain ATCC 35110 / GB-78).